The primary structure comprises 167 residues: MIIYKDIFSGDELLSDAYDINEVDGVIYEADCAMVKVGGDNIDIGANPSTEDGEDDVEDGTEVVNNVVHSFRLQPTGFDKKSFLTYIKGYMKAVKAKLQEKNPDAIPTFEKGAQVYVKKVIGSFKDWEFFTGESMDPDAMVVMLNYREDGTTPFVAIWKHGIDEEKI.

Residues Met-1–Ile-167 enclose the TCTP domain.

The protein belongs to the TCTP family.

The protein resides in the cytoplasm. Its subcellular location is the cytoskeleton. In terms of biological role, involved in protein synthesis. Involved in microtubule stabilization. The protein is Translationally-controlled tumor protein homolog of Candida glabrata (strain ATCC 2001 / BCRC 20586 / JCM 3761 / NBRC 0622 / NRRL Y-65 / CBS 138) (Yeast).